We begin with the raw amino-acid sequence, 421 residues long: Imidazolonepropionase (421 aa).

Fe(3+) is bound by residues His-81 and His-83. Positions 81 and 83 each coordinate Zn(2+). 4-imidazolone-5-propanoate is bound by residues Arg-90, Tyr-153, and His-186. Tyr-153 contacts N-formimidoyl-L-glutamate. His-251 lines the Fe(3+) pocket. His-251 lines the Zn(2+) pocket. Residue Glu-254 participates in 4-imidazolone-5-propanoate binding. Residue Asp-326 participates in Fe(3+) binding. Asp-326 lines the Zn(2+) pocket. N-formimidoyl-L-glutamate is bound by residues Asn-328 and Gly-330. A 4-imidazolone-5-propanoate-binding site is contributed by Ser-331.

It belongs to the metallo-dependent hydrolases superfamily. HutI family. Requires Zn(2+) as cofactor. Fe(3+) is required as a cofactor.

The protein localises to the cytoplasm. It catalyses the reaction 4-imidazolone-5-propanoate + H2O = N-formimidoyl-L-glutamate. It functions in the pathway amino-acid degradation; L-histidine degradation into L-glutamate; N-formimidoyl-L-glutamate from L-histidine: step 3/3. In terms of biological role, catalyzes the hydrolytic cleavage of the carbon-nitrogen bond in imidazolone-5-propanoate to yield N-formimidoyl-L-glutamate. It is the third step in the universal histidine degradation pathway. In Streptococcus pyogenes serotype M3 (strain SSI-1), this protein is Imidazolonepropionase.